A 401-amino-acid chain; its full sequence is Putative F-box/FBD/LRR-repeat protein At3g23955 (401 aa).

The F-box domain maps to 56-102 (VPARFQLPDPLLTQILNHLPTEEAVKTSVLSTRWRTLWLWVHNLELS). LRR repeat units follow at residues 128 to 152 (IESL…AFVK) and 275 to 296 (MSSL…FLRS). Residues 321–373 (IKRVSISSVPECLLSSLEFVEFKAPICGLAPEMMLVWYFLENSPTLKKLTLRL) enclose the FBD domain.

This is Putative F-box/FBD/LRR-repeat protein At3g23955 from Arabidopsis thaliana (Mouse-ear cress).